A 297-amino-acid polypeptide reads, in one-letter code: 33 kDa chaperonin (297 aa).

2 cysteine pairs are disulfide-bonded: cysteine 239–cysteine 241 and cysteine 272–cysteine 275.

The protein belongs to the HSP33 family. Post-translationally, under oxidizing conditions two disulfide bonds are formed involving the reactive cysteines. Under reducing conditions zinc is bound to the reactive cysteines and the protein is inactive.

It localises to the cytoplasm. Functionally, redox regulated molecular chaperone. Protects both thermally unfolding and oxidatively damaged proteins from irreversible aggregation. Plays an important role in the bacterial defense system toward oxidative stress. The sequence is that of 33 kDa chaperonin from Clostridium acetobutylicum (strain ATCC 824 / DSM 792 / JCM 1419 / IAM 19013 / LMG 5710 / NBRC 13948 / NRRL B-527 / VKM B-1787 / 2291 / W).